The primary structure comprises 517 residues: Cytochrome P450 52A8 (517 aa).

A heme-binding site is contributed by cysteine 464.

The protein belongs to the cytochrome P450 family. Heme serves as cofactor.

Its function is as follows. Together with an NADPH cytochrome P450 the enzyme system catalyzes the terminal hydroxylation as the first step in the assimilation of alkanes and fatty acids. Preferentially hydroxylates lauric acid. This chain is Cytochrome P450 52A8 (CYP52A8), found in Candida tropicalis (Yeast).